The primary structure comprises 330 residues: Olfactory receptor 5T9 (330 aa).

Topologically, residues 1-37 (MSIHSPGYTVRRIPVNNVTDTTMFILTGFTDDADLQV) are extracellular. N17 is a glycosylation site (N-linked (GlcNAc...) asparagine). The helical transmembrane segment at 38–58 (LLFLLFFVIYLFTLIGNLGLV) threads the bilayer. Over 59–66 (LLVIGDSR) the chain is Cytoplasmic. The chain crosses the membrane as a helical span at residues 67–87 (LHNPMYYFLSVLSFLDACYST). Residues 88–111 (VVTPKMLVNFISNDKSISYPGCVT) lie on the Extracellular side of the membrane. C109 and C201 form a disulfide bridge. The chain crosses the membrane as a helical span at residues 112 to 132 (EMFLFVTFGTTECFLLAAMAY). The Cytoplasmic portion of the chain corresponds to 133 to 145 (DRFVAIYNPLLYA). A helical membrane pass occupies residues 146-166 (VKMSPRVYIPLIIACYSGGIM). The Extracellular portion of the chain corresponds to 167-208 (HATIHTVATFSLSFCASNEIRHVFCDIPPLLAISCSNTNINQ). The helical transmembrane segment at 209–229 (LLLFYCVGSIEIITILIVLVS) threads the bilayer. The Cytoplasmic portion of the chain corresponds to 230–249 (YSFILFAILKMNSAEGRRKI). Residues 250-270 (FSTCGSHLTGVSIYHGTILFM) traverse the membrane as a helical segment. The Extracellular portion of the chain corresponds to 271 to 283 (YVRPSSNYALEHD). The helical transmembrane segment at 284–304 (MIVSTFYTIVIPMLNPIIYSL) threads the bilayer. The Cytoplasmic portion of the chain corresponds to 305-330 (RNKDVKEAMKKIFERNFFMNKVHFKL).

The protein belongs to the G-protein coupled receptor 1 family.

It localises to the cell membrane. Its function is as follows. Potential odorant receptor. In Mus musculus (Mouse), this protein is Olfactory receptor 5T9.